We begin with the raw amino-acid sequence, 115 residues long: Biotrophy-associated secreted protein 1 (115 aa).

A signal peptide spans 1–22 (MHVFNFAALFTVLATFTATAAA). The disordered stretch occupies residues 24-115 (DQGSNTFDQR…GIRRVENYYP (92 aa)). Composition is skewed to basic and acidic residues over residues 46-55 (IREEKQENVG) and 91-115 (QQKERAERKQDRGLNGIRRVENYYP).

It localises to the secreted. The protein resides in the host cytoplasm. Secreted effector involved in biotrophic colonization of plant cells. Induces an early, basal defense response in susceptible rice, including rapid callose deposition and ROS production in leaves and calli. Also promotes sporulation and mycelia growth suggesting a role across the whole process of interaction, from the biotrophic phase to sporulation. The sequence is that of Biotrophy-associated secreted protein 1 from Pyricularia oryzae (strain 70-15 / ATCC MYA-4617 / FGSC 8958) (Rice blast fungus).